The primary structure comprises 20 residues: Maximin-Hu (20 aa).

It belongs to the bombinin family. As to expression, expressed by the skin glands.

It is found in the secreted. Has antimicrobial activity. This Bombina maxima (Giant fire-bellied toad) protein is Maximin-Hu.